The chain runs to 160 residues: Large ribosomal subunit protein eL21 (160 aa).

Composition is skewed to basic and acidic residues over residues 112–123 and 136–145; these read NDQKKKEAKEKG and REAHFVRTNG. Positions 112-145 are disordered; the sequence is NDQKKKEAKEKGTWVQLKRQPAPPREAHFVRTNG.

The protein belongs to the eukaryotic ribosomal protein eL21 family. As to quaternary structure, component of the large ribosomal subunit.

It is found in the cytoplasm. The protein localises to the cytosol. It localises to the endoplasmic reticulum. In terms of biological role, component of the large ribosomal subunit. The ribosome is a large ribonucleoprotein complex responsible for the synthesis of proteins in the cell. This is Large ribosomal subunit protein eL21 (RPL21) from Capra hircus (Goat).